The sequence spans 203 residues: Orotate phosphoribosyltransferase (203 aa).

Residues R94, K98, H100, and 120–128 (EDLISTGGS) contribute to the 5-phospho-alpha-D-ribose 1-diphosphate site. Position 124 (S124) interacts with orotate.

This sequence belongs to the purine/pyrimidine phosphoribosyltransferase family. PyrE subfamily. Homodimer. Requires Mg(2+) as cofactor.

It catalyses the reaction orotidine 5'-phosphate + diphosphate = orotate + 5-phospho-alpha-D-ribose 1-diphosphate. Its pathway is pyrimidine metabolism; UMP biosynthesis via de novo pathway; UMP from orotate: step 1/2. Catalyzes the transfer of a ribosyl phosphate group from 5-phosphoribose 1-diphosphate to orotate, leading to the formation of orotidine monophosphate (OMP). The chain is Orotate phosphoribosyltransferase from Staphylococcus epidermidis (strain ATCC 35984 / DSM 28319 / BCRC 17069 / CCUG 31568 / BM 3577 / RP62A).